The chain runs to 570 residues: Sulfite reductase [NADPH] hemoprotein beta-component (570 aa).

[4Fe-4S] cluster contacts are provided by cysteine 434, cysteine 440, cysteine 479, and cysteine 483. Cysteine 483 lines the siroheme pocket.

The protein belongs to the nitrite and sulfite reductase 4Fe-4S domain family. Alpha(8)-beta(8). The alpha component is a flavoprotein, the beta component is a hemoprotein. The cofactor is siroheme. It depends on [4Fe-4S] cluster as a cofactor.

The enzyme catalyses hydrogen sulfide + 3 NADP(+) + 3 H2O = sulfite + 3 NADPH + 4 H(+). The protein operates within sulfur metabolism; hydrogen sulfide biosynthesis; hydrogen sulfide from sulfite (NADPH route): step 1/1. Its function is as follows. Component of the sulfite reductase complex that catalyzes the 6-electron reduction of sulfite to sulfide. This is one of several activities required for the biosynthesis of L-cysteine from sulfate. The sequence is that of Sulfite reductase [NADPH] hemoprotein beta-component from Salmonella gallinarum (strain 287/91 / NCTC 13346).